Reading from the N-terminus, the 92-residue chain is Small ribosomal subunit protein uS19 (92 aa).

This sequence belongs to the universal ribosomal protein uS19 family.

Functionally, protein S19 forms a complex with S13 that binds strongly to the 16S ribosomal RNA. The protein is Small ribosomal subunit protein uS19 of Rickettsia typhi (strain ATCC VR-144 / Wilmington).